Here is a 601-residue protein sequence, read N- to C-terminus: Glutamine--fructose-6-phosphate aminotransferase [isomerizing] (601 aa).

Cys2 acts as the Nucleophile; for GATase activity in catalysis. The 215-residue stretch at 2–216 (CGIVGYIGTN…DKEIVIVTKD (215 aa)) folds into the Glutamine amidotransferase type-2 domain. 2 consecutive SIS domains span residues 282–421 (IIDE…EIGD) and 453–591 (IAGE…VDKP). Lys596 (for Fru-6P isomerization activity) is an active-site residue.

As to quaternary structure, homodimer.

It localises to the cytoplasm. The catalysed reaction is D-fructose 6-phosphate + L-glutamine = D-glucosamine 6-phosphate + L-glutamate. Its function is as follows. Catalyzes the first step in hexosamine metabolism, converting fructose-6P into glucosamine-6P using glutamine as a nitrogen source. In Listeria monocytogenes serovar 1/2a (strain ATCC BAA-679 / EGD-e), this protein is Glutamine--fructose-6-phosphate aminotransferase [isomerizing].